The primary structure comprises 207 residues: Large ribosomal subunit protein uL3 (207 aa).

Belongs to the universal ribosomal protein uL3 family. As to quaternary structure, part of the 50S ribosomal subunit. Forms a cluster with proteins L14 and L19.

Its function is as follows. One of the primary rRNA binding proteins, it binds directly near the 3'-end of the 23S rRNA, where it nucleates assembly of the 50S subunit. The protein is Large ribosomal subunit protein uL3 of Fervidobacterium nodosum (strain ATCC 35602 / DSM 5306 / Rt17-B1).